A 270-amino-acid polypeptide reads, in one-letter code: NADPH-dependent 7-cyano-7-deazaguanine reductase (270 aa).

79-81 contributes to the substrate binding site; sequence IES. 81 to 82 contacts NADPH; the sequence is SK. Cys177 acts as the Thioimide intermediate in catalysis. Asp184 functions as the Proton donor in the catalytic mechanism. 216-217 provides a ligand contact to substrate; it reads HE. 245 to 246 contacts NADPH; the sequence is RG.

It belongs to the GTP cyclohydrolase I family. QueF type 2 subfamily. Homodimer.

The protein resides in the cytoplasm. It carries out the reaction 7-aminomethyl-7-carbaguanine + 2 NADP(+) = 7-cyano-7-deazaguanine + 2 NADPH + 3 H(+). It participates in tRNA modification; tRNA-queuosine biosynthesis. Its function is as follows. Catalyzes the NADPH-dependent reduction of 7-cyano-7-deazaguanine (preQ0) to 7-aminomethyl-7-deazaguanine (preQ1). This Acinetobacter baumannii (strain SDF) protein is NADPH-dependent 7-cyano-7-deazaguanine reductase.